A 728-amino-acid chain; its full sequence is MSTESKCPFNHTAAGGTSNKDWWPNQLNLNILHRHSALSDPMDKDFDYAQAFKKLDLAAVKRDLQALMTTSQDWWPADFGHYGGLFVRMAWHSAGTYRTADGRGGAGGGQQRFAPLNSWPDNANLDKARRLLWPIKQKYGRNISWADLLILTGNVALESMGFKTFGYAGGRADTWEPDDVYWGSEKIWLELSGGPNSRYSGDRELENPLAAVQMGLIYVNPEGPDGNPDPVAAARDIRDTFARMAMNDEETVALIAGGHTFGKTHGAGPATDVGPEPEAAGIEQQGLGWKSAYASGKGHDAITSGLEVTWTSTPTKWSHDFFKHLFSYEWELTKSPAGAHQWVAKGADEVIPDAFDASKKHRPTMLTTDLSLRFDPAYEKISRRFYENPAEFADAFARAWFKLTHRDMGPRARYLGPEVPAEELLWQDPIPVVDHPLIDDADVAALKAKVLASGLSVAQLVSTAWASASTFRGSDKRGGANGARIRLAPQKDWEVNQPAALAAVLETLEGVRKAFNDAQTGGKKVSLADLIVLAGAAGIEQAAKNAGVAVTVPFAPGRMDASQEQTDVDAMAVLEPVADGFRNYLKSAYKTPAEALLVDKAQLLTLNGPELTVLVGGLRVLGANVGDAKHGVFTDRPGTLSNDFFVNLLDMGTEWKPVSAANDVFEGRDRATGLVKWTGTRVDLIFGSHSQLRALAEVYGSADANEKFVRDFVAAWDKVMNLDRFDLA.

Positions 91–218 (WHSAGTYRTA…LAAVQMGLIY (128 aa)) form a cross-link, tryptophyl-tyrosyl-methioninium (Trp-Tyr) (with M-244). H92 functions as the Proton acceptor in the catalytic mechanism. The tryptophyl-tyrosyl-methioninium (Tyr-Met) (with W-91) cross-link spans 218–244 (YVNPEGPDGNPDPVAAARDIRDTFARM). H259 lines the heme b pocket.

The protein belongs to the peroxidase family. Peroxidase/catalase subfamily. As to quaternary structure, homodimer or homotetramer. Heme b is required as a cofactor. In terms of processing, formation of the three residue Trp-Tyr-Met cross-link is important for the catalase, but not the peroxidase activity of the enzyme.

The catalysed reaction is H2O2 + AH2 = A + 2 H2O. It carries out the reaction 2 H2O2 = O2 + 2 H2O. Its function is as follows. Bifunctional enzyme with both catalase and broad-spectrum peroxidase activity. The sequence is that of Catalase-peroxidase 1 from Burkholderia ambifaria (strain MC40-6).